A 390-amino-acid polypeptide reads, in one-letter code: Transcription factor bHLH76 (390 aa).

Positions 147-217 are disordered; that stretch reads NVSEDSQSSG…SEKQPSDSLK (71 aa). Residues 207 to 217 are compositionally biased toward basic and acidic residues; that stretch reads NSEKQPSDSLK. A bHLH domain is found at 229-279; that stretch reads QATNSHSLAERVRREKISERMKFLQDLVPGCDKVTGKAVMLDEIINYVQSL.

Homodimer. Interacts with IBH1. Binds reversibly to CRY2 after blue light illumination. Expressed constitutively in roots, leaves, stems, and flowers.

The protein resides in the nucleus. In terms of biological role, transcriptional activator involved in cell elongation. Regulates the expression of a subset of genes involved in cell expansion by binding to the G-box motif. Binds to chromatin DNA of the FT gene and promotes its expression, and thus triggers flowering in response to blue light. This is Transcription factor bHLH76 (BHLH76) from Arabidopsis thaliana (Mouse-ear cress).